The sequence spans 204 residues: Urease accessory protein UreG (204 aa).

Residue 13-20 coordinates GTP; the sequence is GPVGSGKT.

The protein belongs to the SIMIBI class G3E GTPase family. UreG subfamily. As to quaternary structure, homodimer. UreD, UreF and UreG form a complex that acts as a GTP-hydrolysis-dependent molecular chaperone, activating the urease apoprotein by helping to assemble the nickel containing metallocenter of UreC. The UreE protein probably delivers the nickel.

It localises to the cytoplasm. Its function is as follows. Facilitates the functional incorporation of the urease nickel metallocenter. This process requires GTP hydrolysis, probably effectuated by UreG. This Acinetobacter baumannii (strain AB307-0294) protein is Urease accessory protein UreG.